The primary structure comprises 8799 residues: Nesprin-1 (8799 aa).

Positions 1 to 289 are actin-binding; that stretch reads MATSRASSRS…TQYPDIHGAG (289 aa). The Cytoplasmic portion of the chain corresponds to 1 to 8748; sequence MATSRASSRS…GRAFLFRILR (8748 aa). Calponin-homology (CH) domains are found at residues 27 to 134 and 178 to 283; these read IVQK…LYFQ and GNAK…TQYP. Spectrin repeat units lie at residues 314–397, 398–502, 503–609, 610–703, 704–815, 816–923, 924–1024, 1025–1122, 1123–1246, 1247–1333, 1334–1442, 1443–1548, 1549–1651, 1652–1761, 1762–1877, 1878–1974, 1975–2079, 2080–2193, 2194–2301, 2302–2399, 2400–2511, 2512–2617, 2618–2729, 2730–2836, 2837–2960, 2961–3060, 3061–3169, 3170–3273, 3274–3385, 3386–3488, 3489–3591, 3592–3718, 3719–3812, 3813–3918, 3919–4026, 4027–4137, 4138–4233, 4234–4337, 4338–4449, 4450–4558, 4559–4667, 4668–4774, 4775–4880, 4881–4989, 4990–5097, 5098–5207, 5208–5316, 5317–5422, 5423–5520, 5521–5628, 5629–5745, and 5746–5851; these read RDDR…SRLF, DWHI…HLMK, MEFL…SMLE, EVIS…YARA, DEMD…QLTV, PLEE…KHVE, ANSR…HLKI, AVEK…LVDD, PDKW…SSLE, GLIS…ERRI, QVSL…MEMV, KSKW…ILGH, LSQQ…LEDL, LARW…LQSV, LAEH…SHAC, MSTL…ADAL, VALK…QGQC, CGLI…LRVS, LSIW…KDFT, AQRT…QTQA, RIQD…LQDC, VSEL…LRSC, QLAL…LESV, IDQW…VEDL, VKDH…FGQV, TQLE…QNKE, QILQ…LENL, KIQM…VSRL, DRII…LEGA, LSKW…LEKL, VRLH…RMQL, NNVV…YSDW, YGST…LEKG, LHLA…LEAK, VKDH…QRVY, RSLE…KSLK, AELW…REQD, LQRT…IQVS, VTNL…LNKA, LSEK…LEKS, LVSR…TQEA, ILAR…LEDT, TSVY…CESR, MVQS…LTEI, YSRC…LQRC, MVQW…LEDA, VDEW…GKLV, KQEL…EEGK, AMSQ…LSKL, NQAL…LQDA, AKDM…PKEA, and VVQY…PSAH. A coiled-coil region spans residues 314 to 8666; sequence RDDRLILKET…DLEKLLDMSS (8353 aa). K377 bears the Phosphoserine mark. S732 is subject to Phosphoserine. The segment at 1288–1310 is disordered; sequence KKRDLQEQMEQAQQGGQAGPGQE. T2268 is modified (phosphothreonine). Phosphoserine is present on S5655. The segment at 5868–5894 is disordered; it reads PVTEESGEEGTNSEISSPPACRSPSPV. Spectrin repeat units lie at residues 5971–6080, 6081–6187, 6377–6488, 6489–6584, 6585–6694, 6695–6798, 6799–6905, 6906–7023, 7024–7131, 7132–7240, 7241–7353, 7354–7457, 7458–7561, 7562–7674, 7675–7786, 7787–7886, 7887–8000, 8001–8109, and 8110–8221; these read LERQ…LEEK, LSDQ…SLGE, RQSI…RLQQ, ILRF…RSSL, HQNL…LEMW, SHLD…TILK, HWTR…QEKL, HQLQ…LEGL, LESW…LTSA, LGQW…SKAL, LQLW…LQAG, VVDY…LQSF, LLQH…RGII, DSQI…LAFL, LKDW…NEWA, VFSE…LKET, LVAV…IEET, WRLW…LKHF, and ISQR…VRLP. A phosphoserine mark is found at D8225 and S8227. The segment at 8237–8287 is disordered; it reads TALSDLRWQDPSADGMPSPQPSSNPSLSLPQPLRSERSGRDTPASVDSIPL. The segment covering 8257–8269 has biased composition (low complexity); sequence PSSNPSLSLPQPL. T8278 is modified (phosphothreonine). Residues S8281, S8284, and S8308 each carry the phosphoserine modification. Spectrin repeat units follow at residues 8332-8440, 8441-8550, and 8551-8668; these read SSLE…MKQN, LQKW…LQDA, and LMQC…SSSQ. T8363 carries the post-translational modification Phosphothreonine. The segment at 8673-8735 is disordered; the sequence is SWSSADELDT…SDSSRSDPRP (63 aa). Polar residues-rich tracts occupy residues 8682 to 8698 and 8706 to 8718; these read TSGSVSPTSGRSTPNRQ and SLSQPGPSVSSPK. Residues 8721–8735 are compositionally biased toward basic and acidic residues; it reads STRDGSDSSRSDPRP. The region spanning 8740-8799 is the KASH domain; that stretch reads RAFLFRILRAALPFQLLLLLLIGLTCLVPMSEKDYSCALSNNFARSFHPMLRYTNGPPPL. The helical; Anchor for type IV membrane protein transmembrane segment at 8749–8769 threads the bilayer; sequence AALPFQLLLLLLIGLTCLVPM. Residues 8770–8799 lie on the Perinuclear space side of the membrane; that stretch reads SEKDYSCALSNNFARSFHPMLRYTNGPPPL.

This sequence belongs to the nesprin family. As to quaternary structure, core component of LINC complexes which are composed of inner nuclear membrane SUN domain-containing proteins coupled to outer nuclear membrane KASH domain-containing nesprins. SUN and KASH domain-containing proteins seem to bind each other promiscuously; however, differentially expression of LINC complex constituents can give rise to specific assemblies. At least SUN1/2-containing core LINC complexes are proposed to be hexameric composed of three protomers of each KASH and SUN domain-containing protein. The SUN2:SYNE1/KASH1 LINC complex is a heterohexamer; the homotrimeric cloverleave-like conformation of the SUN domain is a prerequisite for LINC complex formation in which three separate SYNE1/KASH1 peptides bind at the interface of adjacent SUN domains. Self-associates. Interacts with SYNE3. Interacts with SUN3; proposed to form a spermatogenesis-specific LINC complex with SUN3 during sperm head formation. May interact with MUSK. Interacts with SPAG4/SUN4. Interacts with EMD and LMNA in vitro. Interacts with F-actin via its N-terminal domain. Interacts with DCTN1 and DYNC1I1/2; suggesting the association with the dynein-dynactin motor complex. Interacts (via KASH domain) with TMEM258. The disulfid bond with SUN1 or SUN2 is required for stability of the respective LINC complex under tensile forces. In terms of tissue distribution, expressed in C2F3 and CH310T1/2 cells, brain and skeletal muscle (at protein level).

Its subcellular location is the nucleus outer membrane. It is found in the nucleus. The protein localises to the nucleus envelope. It localises to the cytoplasm. The protein resides in the cytoskeleton. Its subcellular location is the myofibril. It is found in the sarcomere. Multi-isomeric modular protein which forms a linking network between organelles and the actin cytoskeleton to maintain the subcellular spatial organization. As a component of the LINC (LInker of Nucleoskeleton and Cytoskeleton) complex involved in the connection between the nuclear lamina and the cytoskeleton. The nucleocytoplasmic interactions established by the LINC complex play an important role in the transmission of mechanical forces across the nuclear envelope and in nuclear movement and positioning. May be involved in nucleus-centrosome attachment. During interkinetic nuclear migration (INM) at G2 phase and nuclear migration in neural progenitors its LINC complex association with SUN1/2 and probably association with cytoplasmic dynein-dynactin motor complexes functions to pull the nucleus toward the centrosome; SYNE1 and SYNE2 seem to act redundantly in cerebellum, midbrain, brain stem, and other brain regions except cerebral cortex and hippocampus. Required for centrosome migration to the apical cell surface during early ciliogenesis. May be involved in nuclear remodeling during sperm head formation in spermatogenesis; a probable SUN3:SYNE1/KASH1 LINC complex may tether spermatid nuclei to posterior cytoskeletal structures such as the manchette. In Mus musculus (Mouse), this protein is Nesprin-1.